The sequence spans 175 residues: Enhancer of mRNA-decapping protein 1 (175 aa).

Over residues 1-27 (MSTDTMYFNSSRLLPSAGRNKTNNLIK) the composition is skewed to polar residues. Disordered regions lie at residues 1 to 113 (MSTD…KDDT) and 155 to 175 (GSTF…PSFL). N-acetylserine is present on Ser2. Low complexity predominate over residues 35–47 (ARGNAAKNANNNN). A compositionally biased stretch (polar residues) spans 58–77 (LPNGQKPNFGHSSNKKPSFN). Ser82 bears the Phosphoserine mark. A compositionally biased stretch (basic and acidic residues) spans 100 to 113 (NNKETPRQNNKDDT).

Belongs to the EDC family.

Its subcellular location is the cytoplasm. MRNA-binding protein which stimulates mRNA decapping by DCP1 and DCP2. Involved in the regulation of expression of multiple genes involved in glycolysis and gluconeogenesis. This is Enhancer of mRNA-decapping protein 1 (EDC1) from Saccharomyces cerevisiae (strain ATCC 204508 / S288c) (Baker's yeast).